A 726-amino-acid polypeptide reads, in one-letter code: Mitotic spindle checkpoint protein MAD1 (726 aa).

Residues 1–30 are disordered; that stretch reads MILRTPQPKRLRSDAGESPFPTGATGSGNQ. 2 coiled-coil regions span residues 68 to 246 and 272 to 625; these read ADVL…LKLI and SDNS…VFAD.

Belongs to the MAD1 family. Homodimer. Part of the mitotic checkpoint complex (MCC). Interacts with MAD2 and NUA.

Its subcellular location is the nucleus envelope. Its function is as follows. Required for the execution of the mitotic checkpoint which monitors the process of kinetochore-spindle attachment and delays the onset of anaphase when this process is not complete. It inhibits the activity of the anaphase promoting complex by sequestering CDC20 until all chromosomes are aligned at the metaphase plate. Required for anchoring MAD2 to the nuclear envelope. The chain is Mitotic spindle checkpoint protein MAD1 from Arabidopsis thaliana (Mouse-ear cress).